The chain runs to 1018 residues: Integrator complex subunit 5 (1018 aa).

The disordered stretch occupies residues 1–26 (MSALCDPPGAPGPPGPAPATHGPAPL). Ser2 bears the N-acetylserine mark. Residues 8-17 (PGAPGPPGPA) are compositionally biased toward pro residues. Ser278 carries the phosphoserine modification. Helical transmembrane passes span 533-553 (LATQLYAGLVVSLSGLLPLAF), 855-875 (LLFELLKLVAAAPPALCYCSV), and 929-949 (VFSQLAPFEVRLLLLSVWGFL).

Belongs to the Integrator subunit 5 family. As to quaternary structure, component of the Integrator complex, composed of core subunits INTS1, INTS2, INTS3, INTS4, INTS5, INTS6, INTS7, INTS8, INTS9/RC74, INTS10, INTS11/CPSF3L, INTS12, INTS13, INTS14 and INTS15. The core complex associates with protein phosphatase 2A subunits PPP2CA and PPP2R1A, to form the Integrator-PP2A (INTAC) complex.

The protein localises to the nucleus. It is found in the cytoplasm. Its subcellular location is the nucleus membrane. Component of the integrator complex, a multiprotein complex that terminates RNA polymerase II (Pol II) transcription in the promoter-proximal region of genes. The integrator complex provides a quality checkpoint during transcription elongation by driving premature transcription termination of transcripts that are unfavorably configured for transcriptional elongation: the complex terminates transcription by (1) catalyzing dephosphorylation of the C-terminal domain (CTD) of Pol II subunit POLR2A/RPB1 and SUPT5H/SPT5, (2) degrading the exiting nascent RNA transcript via endonuclease activity and (3) promoting the release of Pol II from bound DNA. The integrator complex is also involved in terminating the synthesis of non-coding Pol II transcripts, such as enhancer RNAs (eRNAs), small nuclear RNAs (snRNAs), telomerase RNAs and long non-coding RNAs (lncRNAs). Mediates recruitment of cytoplasmic dynein to the nuclear envelope, probably as component of the integrator complex. The protein is Integrator complex subunit 5 (Ints5) of Mus musculus (Mouse).